The primary structure comprises 265 residues: Proline-rich protein 23B (265 aa).

Low complexity predominate over residues Met-1–Gln-18. Disordered regions lie at residues Met-1–Ala-49 and Pro-226–Ala-265. The segment covering Pro-226–Pro-237 has biased composition (pro residues). Residues Cys-256 to Ala-265 show a composition bias toward basic residues.

Belongs to the PRR23 family.

The sequence is that of Proline-rich protein 23B (PRR23B) from Homo sapiens (Human).